The following is a 632-amino-acid chain: Arginine--tRNA ligase (632 aa).

The 'HIGH' region signature appears at 120-130; sequence ANPIHPLHIGH.

The protein belongs to the class-I aminoacyl-tRNA synthetase family.

The protein localises to the cytoplasm. The catalysed reaction is tRNA(Arg) + L-arginine + ATP = L-arginyl-tRNA(Arg) + AMP + diphosphate. The protein is Arginine--tRNA ligase of Pyrobaculum islandicum (strain DSM 4184 / JCM 9189 / GEO3).